The chain runs to 929 residues: SCY1-like protein 2 (929 aa).

One can recognise a Protein kinase domain in the interval 32 to 327 (FDVGRHIASG…ADQMTKIPFF (296 aa)). An HEAT repeat occupies 443 to 479 (DEIKNSVLPMVYRALEAPSIQIQELCLNIIPTFANLI). A coiled-coil region spans residues 661–701 (ESENKEDGLQNKHKRASLTLEEKQKLAKEQEQAQKLKSQQP). At Ser677 the chain carries Phosphoserine. A compositionally biased stretch (basic and acidic residues) spans 684 to 694 (QKLAKEQEQAQ). Disordered stretches follow at residues 684-709 (QKLA…VHTP) and 906-929 (NFAQ…DLFG). Residues 695-705 (KLKSQQPLKPQ) show a composition bias toward low complexity. The necessary for interaction with AP2 complex and clathrin, interaction with clathrin is necessary for its targeting to the TGN and endosomal membranes stretch occupies residues 699-929 (QQPLKPQVHT…ASNDLKDLFG (231 aa)). Phosphothreonine is present on Thr708. The span at 912–922 (TTMTNSSSASN) shows a compositional bias: polar residues.

Belongs to the protein kinase superfamily. Interacts with clathrin and AP2B1; the interaction mediates the association with the AP-2 complex. In terms of processing, could autophosphorylate in presence of poly-L-lysine.

It localises to the cytoplasmic vesicle. It is found in the clathrin-coated vesicle. Its subcellular location is the golgi apparatus. The protein localises to the trans-Golgi network membrane. The protein resides in the endosome membrane. Component of the AP2-containing clathrin coat that may regulate clathrin-dependent trafficking at plasma membrane, TGN and endosomal system. A possible serine/threonine-protein kinase toward the beta2-subunit of the plasma membrane adapter complex AP2 and other proteins in presence of poly-L-lysine has not been confirmed. By regulating the expression of excitatory receptors at synapses, plays an essential role in neuronal function and signaling and in brain development. This is SCY1-like protein 2 from Homo sapiens (Human).